A 108-amino-acid polypeptide reads, in one-letter code: UPF0145 protein MADE_1007770 (108 aa).

It belongs to the UPF0145 family.

The polypeptide is UPF0145 protein MADE_1007770 (Alteromonas mediterranea (strain DSM 17117 / CIP 110805 / LMG 28347 / Deep ecotype)).